A 339-amino-acid chain; its full sequence is GTP 3',8-cyclase (339 aa).

Positions 13–249 constitute a Radical SAM core domain; the sequence is RYGRPLRDLR…GEVAQRHAFA (237 aa). Position 22 (arginine 22) interacts with GTP. Residues cysteine 29 and cysteine 33 each coordinate [4Fe-4S] cluster. Tyrosine 35 lines the S-adenosyl-L-methionine pocket. Cysteine 36 is a [4Fe-4S] cluster binding site. Arginine 75 is a binding site for GTP. Position 79 (glycine 79) interacts with S-adenosyl-L-methionine. Threonine 106 serves as a coordination point for GTP. Residue serine 130 coordinates S-adenosyl-L-methionine. Position 168 (lysine 168) interacts with GTP. S-adenosyl-L-methionine is bound at residue methionine 202. Residues cysteine 266 and cysteine 269 each contribute to the [4Fe-4S] cluster site. 271 to 273 contributes to the GTP binding site; that stretch reads RAR. Cysteine 283 lines the [4Fe-4S] cluster pocket.

This sequence belongs to the radical SAM superfamily. MoaA family. Monomer and homodimer. [4Fe-4S] cluster is required as a cofactor.

It catalyses the reaction GTP + AH2 + S-adenosyl-L-methionine = (8S)-3',8-cyclo-7,8-dihydroguanosine 5'-triphosphate + 5'-deoxyadenosine + L-methionine + A + H(+). The protein operates within cofactor biosynthesis; molybdopterin biosynthesis. Functionally, catalyzes the cyclization of GTP to (8S)-3',8-cyclo-7,8-dihydroguanosine 5'-triphosphate. This is GTP 3',8-cyclase from Xanthomonas campestris pv. campestris (strain B100).